The primary structure comprises 392 residues: Protein FAM53C (392 aa).

M1 bears the N-acetylmethionine mark. Positions 76–120 are disordered; that stretch reads LHLRPPSPGSSPQEQSLSQVLSPEPPDPEKLPVPPAPPSKRHCRS. The span at 85 to 97 shows a compositional bias: low complexity; that stretch reads SSPQEQSLSQVLS. Residues S122 and S162 each carry the phosphoserine modification. Disordered regions lie at residues 141 to 167 and 201 to 294; these read LWTPIKHRGSGGGGGPQVPHQSPPKRV and DSSH…EDPR. Over residues 201–215 the composition is skewed to polar residues; the sequence is DSSHPSAASPQSGSW. Residues S232, S234, S255, and S273 each carry the phosphoserine modification. Low complexity predominate over residues 241 to 256; sequence ASRFLPSARSSPASSP. Basic and acidic residues predominate over residues 278–294; it reads LDARKAGVKRRHEEDPR. S299 bears the Phosphoserine mark.

The protein belongs to the FAM53 family.

This chain is Protein FAM53C, found in Bos taurus (Bovine).